The primary structure comprises 309 residues: Protein FdhE (309 aa).

It belongs to the FdhE family.

The protein resides in the cytoplasm. Necessary for formate dehydrogenase activity. The protein is Protein FdhE of Salmonella dublin (strain CT_02021853).